The primary structure comprises 191 residues: dCTP deaminase (191 aa).

Residues K112–R117, T136–E138, Q157, Y173, and Q183 each bind dCTP. The Proton donor/acceptor role is filled by E138.

It belongs to the dCTP deaminase family. In terms of assembly, homotrimer.

It carries out the reaction dCTP + H2O + H(+) = dUTP + NH4(+). It functions in the pathway pyrimidine metabolism; dUMP biosynthesis; dUMP from dCTP (dUTP route): step 1/2. In terms of biological role, catalyzes the deamination of dCTP to dUTP. In Psychrobacter cryohalolentis (strain ATCC BAA-1226 / DSM 17306 / VKM B-2378 / K5), this protein is dCTP deaminase.